We begin with the raw amino-acid sequence, 196 residues long: Adenylate kinase (196 aa).

Residue 9-17 coordinates ATP; it reads GIPGVGKST.

The protein belongs to the archaeal adenylate kinase family.

It is found in the cytoplasm. It catalyses the reaction AMP + ATP = 2 ADP. The sequence is that of Adenylate kinase from Thermococcus onnurineus (strain NA1).